Consider the following 216-residue polypeptide: Elongation factor Ts (216 aa).

The tract at residues 81 to 84 (TDFV) is involved in Mg(2+) ion dislocation from EF-Tu.

The protein belongs to the EF-Ts family.

Its subcellular location is the cytoplasm. In terms of biological role, associates with the EF-Tu.GDP complex and induces the exchange of GDP to GTP. It remains bound to the aminoacyl-tRNA.EF-Tu.GTP complex up to the GTP hydrolysis stage on the ribosome. In Geobacter metallireducens (strain ATCC 53774 / DSM 7210 / GS-15), this protein is Elongation factor Ts.